A 127-amino-acid chain; its full sequence is Class I hydrophobin 1 (127 aa).

A signal peptide spans 1-20; the sequence is MLSLLSKAVSLAILVTAVVA. Cystine bridges form between Cys53–Cys108, Cys60–Cys102, Cys61–Cys94, and Cys109–Cys122. N-linked (GlcNAc...) asparagine glycosylation occurs at Asn66.

Belongs to the fungal hydrophobin family. As to quaternary structure, self-assembles to form functional amyloid fibrils called rodlets. Self-assembly into fibrillar rodlets occurs spontaneously at hydrophobic:hydrophilic interfaces and the rodlets further associate laterally to form amphipathic monolayers. As to expression, expressed everywhere in the mycelial tissues of developing fruiting bodies except for the top parts of the pileus (cap) and for the prehymenophore; but high level of the transcript is detected in the parts surrounding the prehymenophore.

The protein resides in the secreted. It is found in the cell wall. In terms of biological role, aerial growth, conidiation, and dispersal of filamentous fungi in the environment rely upon a capability of their secreting small amphipathic proteins called hydrophobins (HPBs) with low sequence identity. Class I can self-assemble into an outermost layer of rodlet bundles on aerial cell surfaces, conferring cellular hydrophobicity that supports fungal growth, development and dispersal; whereas Class II form highly ordered films at water-air interfaces through intermolecular interactions but contribute nothing to the rodlet structure. Hyd1 is a class I hydrophobin that plays a role in fruiting body initiation rather than in mature fruit body maintenance. Seems to be involved in the formation in the extracellular matrix of lined air channels with a hydrophobic membrane. These channels may help to provide gas exchange during respiration in mycelial tissues of developing fruiting bodies and are formed all over the mycelial tissues of these developing fruiting bodies except for the top parts of the pileus (cap) and for the prehymenophore. This is Class I hydrophobin 1 from Lentinula edodes (Shiitake mushroom).